The chain runs to 563 residues: Probable terpene synthase 4 (563 aa).

Mg(2+) is bound by residues Asp316, Asp320, and Glu469. Positions 316 to 320 (DDIFD) match the DDXXD motif motif.

This sequence belongs to the terpene synthase family. Mg(2+) serves as cofactor.

Its function is as follows. Probable sesquiterpene synthase. In Ricinus communis (Castor bean), this protein is Probable terpene synthase 4 (TPS4).